A 711-amino-acid chain; its full sequence is Putative membrane protein ActII-3 (711 aa).

12 consecutive transmembrane segments (helical) span residues 14–34 (LKWL…PLAG), 175–195 (ADFK…VVTY), 199–219 (LLWL…QAIV), 235–255 (AMIL…LLVA), 281–301 (AIVA…LAAL), 313–333 (VGVL…LVIF), 369–389 (AVWV…VTLN), 516–536 (IIPV…RALV), 540–560 (LLIA…ALFF), 573–593 (FPLW…IFLV), 623–643 (AGLV…VFIA), and 645–665 (LGFT…SVLV). Positions 685-711 (REDPSEDPAVSGMPDSIDSEASTTASR) are disordered.

The protein belongs to the resistance-nodulation-cell division (RND) (TC 2.A.6) family. MmpL subfamily.

The protein resides in the cell membrane. This chain is Putative membrane protein ActII-3 (actII-3), found in Streptomyces coelicolor (strain ATCC BAA-471 / A3(2) / M145).